Here is a 29-residue protein sequence, read N- to C-terminus: Kunitz-type serine protease inhibitor RsTIQ7 (29 aa).

Positions 6 to 26 (QCVPTADPGPCKAYIPMWWYN) constitute a BPTI/Kunitz inhibitor domain.

Its function is as follows. Serine protease inhibitor. Inhibits trypsin, elastase, plasmin and kallikrein. The sequence is that of Kunitz-type serine protease inhibitor RsTIQ7 from Rhipicephalus sanguineus (Brown dog tick).